Consider the following 75-residue polypeptide: Microcin H47 (75 aa).

Residues 1–15 (MREITESQLRYISGA) constitute a propeptide that is removed on maturation. Residues 30-50 (AIVGALAGIPGGPLGVVVGAV) form a helical membrane-spanning segment.

It localises to the secreted. The protein resides in the host cell membrane. In terms of biological role, bactericidal antibiotic. Active on bacteria phylogenetically related to the producing strain. This Escherichia coli O6:H1 (strain CFT073 / ATCC 700928 / UPEC) protein is Microcin H47 (mchB).